A 531-amino-acid polypeptide reads, in one-letter code: NAD(P)H-quinone oxidoreductase chain 4 (531 aa).

The next 14 helical transmembrane spans lie at 9 to 29 (FPWL…IPFF), 41 to 61 (FALS…INGF), 93 to 113 (MPLI…AWPV), 117 to 137 (PKLF…VFAV), 141 to 161 (LLFF…LAIW), 173 to 193 (FIIY…AMGF), 217 to 237 (IFCY…VPLH), 248 to 268 (TAPV…YALL), 282 to 302 (FAPL…LTSF), 311 to 331 (IAYS…SFSS), 337 to 357 (AMLQ…LVGA), 381 to 401 (FALW…SGFV), 422 to 442 (VVMA…LLSM), and 469 to 489 (VYII…PRLV).

It belongs to the complex I subunit 4 family.

It is found in the cellular thylakoid membrane. It carries out the reaction a plastoquinone + NADH + (n+1) H(+)(in) = a plastoquinol + NAD(+) + n H(+)(out). It catalyses the reaction a plastoquinone + NADPH + (n+1) H(+)(in) = a plastoquinol + NADP(+) + n H(+)(out). Its function is as follows. NDH-1 shuttles electrons from NAD(P)H, via FMN and iron-sulfur (Fe-S) centers, to quinones in the respiratory chain. The immediate electron acceptor for the enzyme in this species is believed to be plastoquinone. Couples the redox reaction to proton translocation (for every two electrons transferred, four hydrogen ions are translocated across the cytoplasmic membrane), and thus conserves the redox energy in a proton gradient. The polypeptide is NAD(P)H-quinone oxidoreductase chain 4 (Prochlorococcus marinus (strain MIT 9301)).